A 100-amino-acid polypeptide reads, in one-letter code: NADH-quinone oxidoreductase subunit K (100 aa).

3 consecutive transmembrane segments (helical) span residues 4 to 24 (LQHGLILAAILFALGLTGLLI), 28 to 48 (LLFMLISLEIMINAAALAFVV), and 60 to 80 (VMYILAISLAAAEASIGLALL).

This sequence belongs to the complex I subunit 4L family. As to quaternary structure, NDH-1 is composed of 13 different subunits. Subunits NuoA, H, J, K, L, M, N constitute the membrane sector of the complex.

Its subcellular location is the cell inner membrane. The catalysed reaction is a quinone + NADH + 5 H(+)(in) = a quinol + NAD(+) + 4 H(+)(out). Functionally, NDH-1 shuttles electrons from NADH, via FMN and iron-sulfur (Fe-S) centers, to quinones in the respiratory chain. The immediate electron acceptor for the enzyme in this species is believed to be ubiquinone. Couples the redox reaction to proton translocation (for every two electrons transferred, four hydrogen ions are translocated across the cytoplasmic membrane), and thus conserves the redox energy in a proton gradient. This is NADH-quinone oxidoreductase subunit K from Edwardsiella ictaluri (strain 93-146).